The sequence spans 470 residues: AAA-ATPase At5g17730 (470 aa).

Residues 1-18 form the signal peptide; the sequence is MFSLRNLPSLAPFVSAYA. 252–259 contributes to the ATP binding site; the sequence is GPPGTGKT.

Belongs to the AAA ATPase family. BCS1 subfamily. It depends on Mg(2+) as a cofactor.

It carries out the reaction ATP + H2O = ADP + phosphate + H(+). In Arabidopsis thaliana (Mouse-ear cress), this protein is AAA-ATPase At5g17730.